The following is a 527-amino-acid chain: Pyruvate kinase 2, cytosolic (527 aa).

Residue arginine 58 coordinates substrate. Residues aspartate 60, serine 62, aspartate 92, and threonine 93 each coordinate K(+). 60–63 provides a ligand contact to ATP; that stretch reads DFSW. Substrate is bound at residue lysine 256. Residue glutamate 258 participates in Mg(2+) binding. Positions 281, 282, and 313 each coordinate substrate. Asparagine 282 contacts Mg(2+).

This sequence belongs to the pyruvate kinase family. Homotetramer. Requires Mg(2+) as cofactor. It depends on K(+) as a cofactor.

Its subcellular location is the cytoplasm. It localises to the cytosol. It catalyses the reaction pyruvate + ATP = phosphoenolpyruvate + ADP + H(+). It functions in the pathway carbohydrate degradation; glycolysis; pyruvate from D-glyceraldehyde 3-phosphate: step 5/5. Functionally, key regulatory enzyme of the glycolytic pathway that catalyzes the final step of glycolysis, converting ADP and phosphoenolpyruvate (PEP) to ATP and pyruvate by essentially irreversible transphosphorylation. In Oryza sativa subsp. indica (Rice), this protein is Pyruvate kinase 2, cytosolic.